A 235-amino-acid polypeptide reads, in one-letter code: Ribonuclease 3 (235 aa).

Residues 7-134 (LKDLQNKIEI…LIASIYLDKG (128 aa)) enclose the RNase III domain. Residue E47 coordinates Mg(2+). The active site involves D51. Residues D120 and E123 each contribute to the Mg(2+) site. The active site involves E123. One can recognise a DRBM domain in the interval 161–230 (DYKTKLQEII…AKKAIENMEV (70 aa)).

Belongs to the ribonuclease III family. In terms of assembly, homodimer. Requires Mg(2+) as cofactor.

It is found in the cytoplasm. The catalysed reaction is Endonucleolytic cleavage to 5'-phosphomonoester.. In terms of biological role, digests double-stranded RNA. Involved in the processing of primary rRNA transcript to yield the immediate precursors to the large and small rRNAs (23S and 16S). Processes some mRNAs, and tRNAs when they are encoded in the rRNA operon. Processes pre-crRNA and tracrRNA of type II CRISPR loci if present in the organism. In Clostridium tetani (strain Massachusetts / E88), this protein is Ribonuclease 3.